We begin with the raw amino-acid sequence, 374 residues long: F-box/kelch-repeat protein At2g24250 (374 aa).

Residues 14 to 63 (PDWSQLPEELLHIISTHLEDHYFDAVHARSVCRSWRSTFPFPSSLLRQSY) enclose the F-box domain. Kelch repeat units lie at residues 100–150 (SEYF…PLGH) and 249–301 (NFLV…LGNF).

The protein is F-box/kelch-repeat protein At2g24250 of Arabidopsis thaliana (Mouse-ear cress).